The primary structure comprises 397 residues: MTAPGLTAAVEGIAHNKGELFASFDVDAFEVPHGRDEIWRFTPLRRLRGLHDGSARATGSATITVSERPGVYTQTVRRGDPRLGEGGVPTDRVAAQAFSSFNSATLVTVERDTQVVEPVGITVTGPGEGAVAYGHLQVRIEELGEAVVVIDHRGGGTYADNVEFVVDDAARLTAVWIADWADDTVHLSAHHARIGKDAVLRHVTVMLGGDVVRMSAGVRFCGAGGDAELLGLYFADDGQHLESRLLVDHAHPDCKSNVLYKGALQGDPASSLPDAHTVWVGDVLIRAQATGTDTFEVNRNLVLTDGARADSVPNLEIETGEIVGAGHASATGRFDDEQLFYLRSRGIPEAQARRLVVRGFFGEIIAKIAVPEVRERLTAAIEHELEITESTEKTTVS.

Belongs to the iron-sulfur cluster assembly SufBD family.

The protein is Iron-sulfur cluster assembly SufBD family protein Mb1497 of Mycobacterium bovis (strain ATCC BAA-935 / AF2122/97).